We begin with the raw amino-acid sequence, 171 residues long: Protein GrpE (171 aa).

The segment at 1–22 is disordered; sequence MNHEHPDIESQQSAADAAAAAG.

This sequence belongs to the GrpE family. In terms of assembly, homodimer.

The protein localises to the cytoplasm. Its function is as follows. Participates actively in the response to hyperosmotic and heat shock by preventing the aggregation of stress-denatured proteins, in association with DnaK and GrpE. It is the nucleotide exchange factor for DnaK and may function as a thermosensor. Unfolded proteins bind initially to DnaJ; upon interaction with the DnaJ-bound protein, DnaK hydrolyzes its bound ATP, resulting in the formation of a stable complex. GrpE releases ADP from DnaK; ATP binding to DnaK triggers the release of the substrate protein, thus completing the reaction cycle. Several rounds of ATP-dependent interactions between DnaJ, DnaK and GrpE are required for fully efficient folding. This Stenotrophomonas maltophilia (strain R551-3) protein is Protein GrpE.